A 120-amino-acid polypeptide reads, in one-letter code: NAD(P)H-quinone oxidoreductase subunit 3 (120 aa).

The next 3 membrane-spanning stretches (helical) occupy residues 10 to 32 (LLGF…KVLR), 64 to 84 (MFAL…PWAV), and 89 to 109 (LGVL…VGLV).

The protein belongs to the complex I subunit 3 family. In terms of assembly, NDH-1 can be composed of about 15 different subunits; different subcomplexes with different compositions have been identified which probably have different functions.

Its subcellular location is the cellular thylakoid membrane. The enzyme catalyses a plastoquinone + NADH + (n+1) H(+)(in) = a plastoquinol + NAD(+) + n H(+)(out). It catalyses the reaction a plastoquinone + NADPH + (n+1) H(+)(in) = a plastoquinol + NADP(+) + n H(+)(out). NDH-1 shuttles electrons from an unknown electron donor, via FMN and iron-sulfur (Fe-S) centers, to quinones in the respiratory and/or the photosynthetic chain. The immediate electron acceptor for the enzyme in this species is believed to be plastoquinone. Couples the redox reaction to proton translocation, and thus conserves the redox energy in a proton gradient. Cyanobacterial NDH-1 also plays a role in inorganic carbon-concentration. In Acaryochloris marina (strain MBIC 11017), this protein is NAD(P)H-quinone oxidoreductase subunit 3.